The following is a 639-amino-acid chain: Developmental regulatory protein wetA (639 aa).

4 disordered regions span residues 65-97 (MDPS…EFDF), 206-369 (TTMR…SAAS), 418-552 (GLLI…SADE), and 587-613 (LMTG…RRRR). Residues 69-78 (HHHHHPHHHA) are compositionally biased toward basic residues. Composition is skewed to polar residues over residues 81-90 (ESSTTSSGVS) and 214-226 (VSQT…SPSM). Residues 246–255 (RGRRAHRAHT) show a composition bias toward basic residues. Low complexity-rich tracts occupy residues 256-275 (QHAL…QAHQ), 346-369 (QQQW…SAAS), and 506-526 (HSSG…RVSV).

It belongs to the wetA family.

In terms of biological role, brlA, abaA and wetA are pivotal regulators of conidiophore development and conidium maturation. They act individually and together to regulate their own expression and that of numerous other sporulation-specific genes. Acts as a crucial regulator of both conidiation capacity and conidial quality. Plays a role in virulence. The protein is Developmental regulatory protein wetA of Beauveria bassiana (strain ARSEF 2860) (White muscardine disease fungus).